A 149-amino-acid polypeptide reads, in one-letter code: Calmodulin-B (149 aa).

Position 2 is an N-acetylalanine (A2). EF-hand domains follow at residues E8–N43, P44–E79, D81–K116, and L117–K149. Residues D21, D23, D25, T27, E32, D57, D59, N61, T63, E68, D94, D96, N98, and E105 each contribute to the Ca(2+) site. The residue at position 116 (K116) is an N6,N6,N6-trimethyllysine. 5 residues coordinate Ca(2+): D130, D132, D134, Q136, and E141.

Belongs to the calmodulin family.

Its function is as follows. Calmodulin mediates the control of a large number of enzymes, ion channels and other proteins by Ca(2+). Among the enzymes to be stimulated by the calmodulin-Ca(2+) complex are a number of protein kinases and phosphatases. The sequence is that of Calmodulin-B from Halocynthia roretzi (Sea squirt).